The chain runs to 1370 residues: Zinc finger MYM-type protein 3 (1370 aa).

Composition is skewed to low complexity over residues 1–12 (MDPSDFPSPFDP) and 52–61 (PSSGALDLLD). 2 disordered regions span residues 1–72 (MDPS…DPGV) and 90–301 (PSPP…QRAG). Residues 230 to 253 (ASEKPPERKRSERVRRAEPPKPEV) are compositionally biased toward basic and acidic residues. A phosphoserine mark is found at Ser263 and Ser267. Residues 263 to 279 (SDEDSDAMVDDPNDEDF) are compositionally biased toward acidic residues. Residues Lys308, Lys320, and Lys328 each participate in a glycyl lysine isopeptide (Lys-Gly) (interchain with G-Cter in SUMO2) cross-link. 9 MYM-type zinc fingers span residues 332–366 (QLFCSSSCLTTFSKKPSGKKTCTFCKKEIWNTKDS), 378–422 (HEFC…LHEV), 429–464 (HRLCSDSCFSKFRANKGLKTNCCDQCGAYIYTKTGS), 477–511 (KRFCNTTCLGAYKKKNTRVYPCVWCKTLCKNFEML), 521–559 (SLFCSLCCTTSYKVKQAGLTGPPRPCSFCRRSLSDPCYY), 567–604 (YQFCSPSCWTKFQRTSPEGGIHLSCHYCHSLFSGKPEV), 612–646 (FQFCCRDCCEDFKRLRGVVSQCEHCRQEKLLHEKL), 653–692 (KSFCSEGCVLLYKQDFTKKLGLCCITCTYCSQTCQRGVTE), and 699–733 (WDFCSEDCKSKYLLWYCKAARCHACKRQGKLLETI). Phosphoserine is present on Ser464. Residues 759–794 (NLDTQSGPESLLNSQSPESKPQTPSQTKVENSNTVR) show a composition bias toward polar residues. The segment at 759–830 (NLDTQSGPES…PPPPATPRKN (72 aa)) is disordered. Glycyl lysine isopeptide (Lys-Gly) (interchain with G-Cter in SUMO2) cross-links involve residues Lys778 and Lys786. At Thr795 the chain carries Phosphothreonine. Lys804 is covalently cross-linked (Glycyl lysine isopeptide (Lys-Gly) (interchain with G-Cter in SUMO2)). The span at 815 to 826 (APTPPPPPPPAT) shows a compositional bias: pro residues. 2 positions are modified to phosphothreonine: Thr817 and Thr826. Residues Lys847, Lys861, Lys920, and Lys1275 each participate in a glycyl lysine isopeptide (Lys-Gly) (interchain with G-Cter in SUMO2) cross-link.

In terms of assembly, may be a component of a BHC histone deacetylase complex that contains HDAC1, HDAC2, HMG20B/BRAF35, KDM1A, RCOR1/CoREST, PHF21A/BHC80, ZMYM2, ZNF217, ZMYM3, GSE1 and GTF2I. As to expression, most abundant in brain, moderate in muscle and heart, low in other tissues except placenta.

It is found in the nucleus. Functionally, plays a role in the regulation of cell morphology and cytoskeletal organization. This is Zinc finger MYM-type protein 3 (ZMYM3) from Homo sapiens (Human).